A 369-amino-acid chain; its full sequence is Fructose-bisphosphate aldolase (369 aa).

Asp-40 contributes to the dihydroxyacetone phosphate binding site. D-glyceraldehyde 3-phosphate-binding residues include Ser-42 and Thr-45. Arg-49 contributes to the beta-D-fructose 1,6-bisphosphate binding site. Lys-113 contacts D-glyceraldehyde 3-phosphate. Lys-152 is a dihydroxyacetone phosphate binding site. Glu-195 contacts D-glyceraldehyde 3-phosphate. Residue Glu-195 is the Proton acceptor of the active site. Positions 237, 279, and 280 each coordinate dihydroxyacetone phosphate. The Schiff-base intermediate with dihydroxyacetone phosphate role is filled by Lys-237. Beta-D-fructose 1,6-bisphosphate-binding positions include 279-281 and Ser-307; that span reads SGG. Gly-309 and Arg-310 together coordinate dihydroxyacetone phosphate. Position 310 (Arg-310) interacts with beta-D-fructose 1,6-bisphosphate.

It belongs to the class I fructose-bisphosphate aldolase family. Homotetramer. Interacts with TRAP (via cytoplasmic domain); the interaction prevents substrate binding and thereby inhibits aldolase activity. Interacts with MTRAP (via cytoplasmic domain); MTRAP phosphorylation may increase the binding to FBPA. Interact with RH1 (via cytoplasmic domain). Interacts with RH2b (via cytoplasmic domain). Interacts with RH4 (via cytoplasmic domain). Interacts with AMA1 (via cytoplasmic domain); the interaction is weak, however it may be increased upon AMA1 phosphorylation. Interacts with EBA140 (via cytoplasmic domain); the interaction is weak. Interacts with EBA175 (via cytoplasmic domain); the interaction is weak. Interacts with EBA181 (via cytoplasmic domain); the interaction is weak. Interacts with G-actin and F-actin. May interact with ACT2/actin II; the interaction inhibits FBPA catalytic activity. Interacts with human SLC4A1/band 3 (via N-terminus); the interaction inhibits FBPA catalytic activity.

The protein resides in the cytoplasm. It localises to the membrane. Its subcellular location is the host cell membrane. The enzyme catalyses beta-D-fructose 1,6-bisphosphate = D-glyceraldehyde 3-phosphate + dihydroxyacetone phosphate. It functions in the pathway carbohydrate degradation; glycolysis; D-glyceraldehyde 3-phosphate and glycerone phosphate from D-glucose: step 4/4. With respect to regulation, the cytoplasmic tail of TRAP and probably other adhesins acts as a competitive inhibitor as the binding sites of the glycolytic substrate fructose 1,6-bisphosphate and TRAP partially overlap. In terms of biological role, plays a key role in glycolysis by catalyzing the cleavage of fructose 1,6-bisphosphate into dihydroxyacetone phosphate and glyceraldehyde 3-phosphate. Independently of its catalytic activity, connects the actin filaments, and thus the actomyosin motor, to cell surface adhesins of the thrombospondin-related anonymous protein (TRAP), the erythrocyte binding ligand (EBL) and reticulocyte binding homolog (RH) protein families; this interaction is probably involved in transducing the motor force across the parasite surface required for sporozoite and ookinete gliding motility and merozoite invasion. Stimulates actin polymerisation. The chain is Fructose-bisphosphate aldolase from Plasmodium falciparum (isolate 3D7).